Here is a 495-residue protein sequence, read N- to C-terminus: Polybrominated aromatic compounds synthase (495 aa).

C437 provides a ligand contact to heme.

Belongs to the cytochrome P450 family. The cofactor is heme.

Functionally, cytochrome P450 protein involved in the biosynthesis of polybrominated aromatic organic compounds. In the presence of ferredoxin, ferredoxin reductase and NADH, catalyzes the coupling of bromophenols and bromopyrroles, forming various polybrominated biphenyls and hydroxylated polybrominated diphenyl ethers (OH-BDE). Can also mediate the heterocoupling of 3,5-dibromocatechol, forming six different compounds, including polybrominated dibenzo-p-dioxins, which are among the most toxic molecules known to man. The chain is Polybrominated aromatic compounds synthase from Marinomonas mediterranea (strain ATCC 700492 / JCM 21426 / NBRC 103028 / MMB-1).